The sequence spans 331 residues: Pyrimidine monooxygenase RutA (331 aa).

Residues 79 to 80, Asn-145, Glu-154, 170 to 171, and Ser-220 contribute to the FMN site; these read IK and RY. The interval 300 to 331 is disordered; that stretch reads WLTEQSQKDTRSGTDTNVRQMADPTSASAFNH. The span at 312 to 331 shows a compositional bias: polar residues; sequence GTDTNVRQMADPTSASAFNH.

This sequence belongs to the NtaA/SnaA/DszA monooxygenase family. RutA subfamily.

It catalyses the reaction uracil + FMNH2 + NADH + O2 = (Z)-3-ureidoacrylate + FMN + NAD(+) + H2O + H(+). It carries out the reaction thymine + FMNH2 + NADH + O2 = (Z)-2-methylureidoacrylate + FMN + NAD(+) + H2O + H(+). Functionally, catalyzes the pyrimidine ring opening between N-3 and C-4 by an unusual flavin hydroperoxide-catalyzed mechanism, adding oxygen atoms in the process to yield ureidoacrylate peracid, that immediately reacts with FMN forming ureidoacrylate and FMN-N(5)-oxide. The FMN-N(5)-oxide reacts spontaneously with NADH to produce FMN. Requires the flavin reductase RutF to regenerate FMN in vivo. This is Pyrimidine monooxygenase RutA from Escherichia coli O7:K1 (strain IAI39 / ExPEC).